The chain runs to 486 residues: Bifunctional protein HldE (486 aa).

The ribokinase stretch occupies residues M1–G329. N204–E207 is a binding site for ATP. The active site involves D274. Residues F355 to K486 form a cytidylyltransferase region.

It in the N-terminal section; belongs to the carbohydrate kinase PfkB family. In the C-terminal section; belongs to the cytidylyltransferase family. In terms of assembly, homodimer.

It catalyses the reaction D-glycero-beta-D-manno-heptose 7-phosphate + ATP = D-glycero-beta-D-manno-heptose 1,7-bisphosphate + ADP + H(+). It carries out the reaction D-glycero-beta-D-manno-heptose 1-phosphate + ATP + H(+) = ADP-D-glycero-beta-D-manno-heptose + diphosphate. Its pathway is nucleotide-sugar biosynthesis; ADP-L-glycero-beta-D-manno-heptose biosynthesis; ADP-L-glycero-beta-D-manno-heptose from D-glycero-beta-D-manno-heptose 7-phosphate: step 1/4. It participates in nucleotide-sugar biosynthesis; ADP-L-glycero-beta-D-manno-heptose biosynthesis; ADP-L-glycero-beta-D-manno-heptose from D-glycero-beta-D-manno-heptose 7-phosphate: step 3/4. Its function is as follows. Catalyzes the phosphorylation of D-glycero-D-manno-heptose 7-phosphate at the C-1 position to selectively form D-glycero-beta-D-manno-heptose-1,7-bisphosphate. In terms of biological role, catalyzes the ADP transfer from ATP to D-glycero-beta-D-manno-heptose 1-phosphate, yielding ADP-D-glycero-beta-D-manno-heptose. The chain is Bifunctional protein HldE from Hyphomonas neptunium (strain ATCC 15444).